The primary structure comprises 878 residues: Alanine--tRNA ligase (878 aa).

Zn(2+)-binding residues include histidine 564, histidine 568, cysteine 666, and histidine 670.

Belongs to the class-II aminoacyl-tRNA synthetase family. As to quaternary structure, homotetramer. The cofactor is Zn(2+).

The protein localises to the cytoplasm. It catalyses the reaction tRNA(Ala) + L-alanine + ATP = L-alanyl-tRNA(Ala) + AMP + diphosphate. Catalyzes the attachment of alanine to tRNA(Ala) in a two-step reaction: alanine is first activated by ATP to form Ala-AMP and then transferred to the acceptor end of tRNA(Ala). Also edits incorrectly charged Ser-tRNA(Ala) and Gly-tRNA(Ala) via its editing domain. The sequence is that of Alanine--tRNA ligase from Buchnera aphidicola subsp. Acyrthosiphon pisum (strain APS) (Acyrthosiphon pisum symbiotic bacterium).